We begin with the raw amino-acid sequence, 186 residues long: ATP synthase subunit delta (186 aa).

Belongs to the ATPase delta chain family. As to quaternary structure, F-type ATPases have 2 components, F(1) - the catalytic core - and F(0) - the membrane proton channel. F(1) has five subunits: alpha(3), beta(3), gamma(1), delta(1), epsilon(1). F(0) has three main subunits: a(1), b(2) and c(10-14). The alpha and beta chains form an alternating ring which encloses part of the gamma chain. F(1) is attached to F(0) by a central stalk formed by the gamma and epsilon chains, while a peripheral stalk is formed by the delta and b chains.

It localises to the cell inner membrane. In terms of biological role, f(1)F(0) ATP synthase produces ATP from ADP in the presence of a proton or sodium gradient. F-type ATPases consist of two structural domains, F(1) containing the extramembraneous catalytic core and F(0) containing the membrane proton channel, linked together by a central stalk and a peripheral stalk. During catalysis, ATP synthesis in the catalytic domain of F(1) is coupled via a rotary mechanism of the central stalk subunits to proton translocation. Its function is as follows. This protein is part of the stalk that links CF(0) to CF(1). It either transmits conformational changes from CF(0) to CF(1) or is implicated in proton conduction. The chain is ATP synthase subunit delta from Ruegeria sp. (strain TM1040) (Silicibacter sp.).